The primary structure comprises 344 residues: Methionine import ATP-binding protein MetN (344 aa).

Positions 2-241 (LELKQVGKVY…PQAEVTKAFV (240 aa)) constitute an ABC transporter domain. Position 38 to 45 (38 to 45 (GYSGAGKS)) interacts with ATP.

It belongs to the ABC transporter superfamily. Methionine importer (TC 3.A.1.24) family. In terms of assembly, the complex is composed of two ATP-binding proteins (MetN), two transmembrane proteins (MetI) and a solute-binding protein (MetQ).

It localises to the cell membrane. It carries out the reaction L-methionine(out) + ATP + H2O = L-methionine(in) + ADP + phosphate + H(+). The catalysed reaction is D-methionine(out) + ATP + H2O = D-methionine(in) + ADP + phosphate + H(+). Its function is as follows. Part of the ABC transporter complex MetNIQ involved in methionine import. Responsible for energy coupling to the transport system. This Latilactobacillus sakei subsp. sakei (strain 23K) (Lactobacillus sakei subsp. sakei) protein is Methionine import ATP-binding protein MetN.